The following is a 249-amino-acid chain: 3-deoxy-D-manno-octulosonic acid kinase (249 aa).

Asp-175 is a catalytic residue.

Belongs to the protein kinase superfamily. KdkA/RfaP family.

The protein resides in the cell inner membrane. The catalysed reaction is an alpha-Kdo-(2-&gt;6)-lipid IVA + ATP = a 4-O-phospho-alpha-Kdo-(2-&gt;6)-lipid IVA + ADP + H(+). Its pathway is bacterial outer membrane biogenesis; LPS core biosynthesis. Functionally, catalyzes the ATP-dependent phosphorylation of the 3-deoxy-D-manno-octulosonic acid (Kdo) residue in Kdo-lipid IV(A) at the 4-OH position. This Xanthomonas oryzae pv. oryzae (strain PXO99A) protein is 3-deoxy-D-manno-octulosonic acid kinase.